The primary structure comprises 777 residues: MKTYTYSKQDLSFIEQLSQAYCKDPFSYLGLHQAGDVSVIRVFLPEATTVKILSADGQILSEALKIDDSGLFVAQLSQQYSSLNYRLRVGYSLAEIDLEDPYRFTSSLLPMDNWLLAEGTHLRPYEILGAHLKTQEGVSGVHFSVWAPNARRVSVVGDFNYWDGRVNPMRFHAESGIWDIFLPNVEKGALYKFEILDSNGNIRLKSDPYAFASQFRPDTASVVTGLPEKIEVDAKLRHANEPDQPISIYEVHLGSWRRHLENNYWLNYEEIANELIPYVKDMGFTHIELLPITEYPFDGSWGYQPTGLYSPTSRFGSPDDLRTLIRKAHEAGINVILDWVVGHFPTDSHGLTEFDGSHLYEHQDPREGYHQDWNTLIFNYGRHEVFNYLSSNALYWTERFGIDGLRVDAVSSMIYRDYSRKDGEWIPNQYGGRENLEALDFLRRTNRMLKKEGHGAVVIAEESTSFAGITHSPTENGVGFDYKWNMGWMNDTLRYMSLDPIYRQYHHDWMTFGMMYQYSEKFVLPLSHDEVVHGKCSILGKMSGDCWQKFANLRAYYGYMWGYPGKKLLFMGNEFAQGREWNYNESLDWFLLGEQGGGWHKGVLNWVRDLNRTYQKYPALYQLDYDPAGFEWLVVDDWQQSVFAFERKAKNGESVIVVSNFTPVVRHNYRIGVRQDGTYTEILNSDAAYYEGSNVGNYGEIECEAIESHGKPFSIELSIPPLSTIFIACQPKPKEAVEAEQDIVKMAEVAMQKALKPTKKTVSVKAKAHKKAHKNKK.

The active-site Nucleophile is Asp-408. The active-site Proton donor is Glu-461.

It belongs to the glycosyl hydrolase 13 family. GlgB subfamily. In terms of assembly, monomer.

The catalysed reaction is Transfers a segment of a (1-&gt;4)-alpha-D-glucan chain to a primary hydroxy group in a similar glucan chain.. The protein operates within glycan biosynthesis; glycogen biosynthesis. In terms of biological role, catalyzes the formation of the alpha-1,6-glucosidic linkages in glycogen by scission of a 1,4-alpha-linked oligosaccharide from growing alpha-1,4-glucan chains and the subsequent attachment of the oligosaccharide to the alpha-1,6 position. This is 1,4-alpha-glucan branching enzyme GlgB from Actinobacillus pleuropneumoniae serotype 3 (strain JL03).